Here is a 477-residue protein sequence, read N- to C-terminus: Ribulose bisphosphate carboxylase large chain (477 aa).

The propeptide occupies 1-2; that stretch reads MS. Pro-3 bears the N-acetylproline mark. Position 14 is an N6,N6,N6-trimethyllysine (Lys-14). Substrate contacts are provided by Asn-123 and Thr-173. Catalysis depends on Lys-175, which acts as the Proton acceptor. Residue Lys-177 participates in substrate binding. Lys-201, Asp-203, and Glu-204 together coordinate Mg(2+). Lys-201 is subject to N6-carboxylysine. His-294 serves as the catalytic Proton acceptor. 3 residues coordinate substrate: Arg-295, His-327, and Ser-379.

It belongs to the RuBisCO large chain family. Type I subfamily. Heterohexadecamer of 8 large chains and 8 small chains; disulfide-linked. The disulfide link is formed within the large subunit homodimers. Mg(2+) serves as cofactor. In terms of processing, the disulfide bond which can form in the large chain dimeric partners within the hexadecamer appears to be associated with oxidative stress and protein turnover.

It localises to the plastid. It is found in the chloroplast. It catalyses the reaction 2 (2R)-3-phosphoglycerate + 2 H(+) = D-ribulose 1,5-bisphosphate + CO2 + H2O. The catalysed reaction is D-ribulose 1,5-bisphosphate + O2 = 2-phosphoglycolate + (2R)-3-phosphoglycerate + 2 H(+). In terms of biological role, ruBisCO catalyzes two reactions: the carboxylation of D-ribulose 1,5-bisphosphate, the primary event in carbon dioxide fixation, as well as the oxidative fragmentation of the pentose substrate in the photorespiration process. Both reactions occur simultaneously and in competition at the same active site. The chain is Ribulose bisphosphate carboxylase large chain from Digitalis purpurea (Common foxglove).